A 329-amino-acid polypeptide reads, in one-letter code: Eukaryotic translation initiation factor 2 subunit 1 (329 aa).

Residues 24–95 form the S1 motif domain; the sequence is DDLIMVKVNR…QKGYIDLSKR (72 aa). Serine 59 is modified (phosphoserine; by eIK1, eIK2 and PK4). Positions 291–329 are disordered; it reads LDKHDGISSDDDDYNTSDEDDENSSEEDENTSEDEEEED. Residues 298–329 are compositionally biased toward acidic residues; the sequence is SSDDDDYNTSDEDDENSSEEDENTSEDEEEED.

Belongs to the eIF-2-alpha family. In terms of processing, phosphorylated at Ser-59 by eIK1 in response to amino acid starvation. Phosphorylates at Ser-59 in schizonts and gametocytes but not in rings and young trophozoites. Phosphorylates at Ser-59 by eIK2 in salivary gland sporozoites but not in midgut and hemocoel sporozoites. Dephosphorylated at Ser-59 by UIS2. Phosphorylation of eIF2alpha subunit of the pre-initiation complex eIF2 inhibits recycling of inactive eIF2-GDP to active eIF2-GTP by limiting the activity of the guanine nucleotide exchange factor eIF2B and thus, inhibits protein translation.

It is found in the cytoplasm. Its subcellular location is the stress granule. Functionally, functions in the early steps of protein synthesis by forming a ternary complex with GTP and initiator tRNA. May regulate protein translation in response to amino acid starvation. May regulate protein at various stages of parasite development. This is Eukaryotic translation initiation factor 2 subunit 1 from Plasmodium falciparum (isolate 3D7).